A 485-amino-acid chain; its full sequence is Serine/threonine-protein kinase 4 (485 aa).

A Protein kinase domain is found at 30-281 (FDVLEKLGEG…ATELLQHPFI (252 aa)). ATP contacts are provided by residues 36–44 (LGEGSYGSV) and lysine 59. Aspartate 149 (proton acceptor) is an active-site residue. A Phosphothreonine; by autocatalysis modification is found at threonine 183. The stretch at 287 to 313 (ESILRHLINEAQDAKLKRTELKQREVE) forms a coiled coil. The 48-residue stretch at 431–478 (YSFLKDWSVTELQLRLNSLDPMMEQEIEEIHHKYQAKRQPILEAIESK) folds into the SARAH domain.

Belongs to the protein kinase superfamily. STE Ser/Thr protein kinase family. STE20 subfamily. In terms of assembly, homodimer; mediated via the coiled-coil region. Mg(2+) is required as a cofactor. Autophosphorylated on Thr-183. In terms of processing, proteolytically cleaved by caspase-3 during apoptosis at Asp-326 resulting in a 37 kDa form. Proteolytic cleavage results in kinase activation and nuclear translocation of the truncated form (MST1/N).

Its subcellular location is the cytoplasm. The protein resides in the nucleus. The catalysed reaction is L-seryl-[protein] + ATP = O-phospho-L-seryl-[protein] + ADP + H(+). It catalyses the reaction L-threonyl-[protein] + ATP = O-phospho-L-threonyl-[protein] + ADP + H(+). Its activity is regulated as follows. The C-terminal non-catalytic region inhibits the kinase activity, the enzyme is activated by caspase-cleavage. Homodimerization and autophosphorylation of Thr-183 is also required for full activation. Stress-activated, pro-apoptotic kinase which, following caspase-cleavage, enters the nucleus and induces chromatin condensation followed by internucleosomal DNA fragmentation. Key component of the Hippo signaling pathway which plays a pivotal role in organ size control and tumor suppression by restricting proliferation and promoting apoptosis. The core of this pathway is composed of a kinase cascade wherein stk3/mst2 and stk4/mst1, in complex with its regulatory protein sav1, phosphorylates and activates lats1/2 in complex with its regulatory protein mob1, which in turn phosphorylates and inactivates yap1 oncoprotein and wwtr1/taz. Phosphorylation of yap1 by lats2 inhibits its translocation into the nucleus to regulate cellular genes important for cell proliferation, cell death, and cell migration. Phosphorylates 'Ser-14' of histone H2B (H2BS14ph) during apoptosis. The chain is Serine/threonine-protein kinase 4 (stk4) from Xenopus tropicalis (Western clawed frog).